Consider the following 37-residue polypeptide: Alpha-conotoxin-like Kn1.2 (37 aa).

Over residues 1–15 the composition is skewed to basic and acidic residues; it reads ESDGAHAKARADKPA. The propeptide occupies 1–22; that stretch reads ESDGAHAKARADKPARSATNRQ. Positions 1–23 are disordered; the sequence is ESDGAHAKARADKPARSATNRQP. Cystine bridges form between C25/C31 and C26/C36. Cysteine amide is present on C36.

Belongs to the conotoxin A superfamily. As to expression, expressed by the venom duct.

It localises to the secreted. In terms of biological role, alpha-conotoxins act on postsynaptic membranes, they bind to the nicotinic acetylcholine receptors (nAChR) and thus inhibit them. This toxin inhibits high voltage-activated (HVA) calcium channel currents in rat DRG neurons (13% inhibition at 1 uM toxin) probably by activating GABA(B) receptors (GABBR1 and/or GABBR2). The polypeptide is Alpha-conotoxin-like Kn1.2 (Conus kinoshitai (Kinoshita's cone)).